Here is a 443-residue protein sequence, read N- to C-terminus: MIKERRTELVEGFRHSVPYINTHRGKTFVIMLGGEAIEHDNFSSIVNDIGLLHSLGIRLVVVYGARPQIDANLAAHHHEPIYHKNTRVTDAKTLELVKQAAGLLQLDITARLSMSLNNTPLQGAHINVVSGNFTIAQPLGVDDGVDYCHSGRIRRIDEDAINRQLDNGAIVLIGPVAVSVTGESFNLTSEEIATQLAVKLKAEKMIGFCSSQGVTNSKGDVISELFPNEAQARVEELEAQGDYNSGTVRFLRGAVKACRSGVRRCHLISYQEDGTLLQELFSREGIGTQIVMESAEQIRRATINDIGGILELIRPLEQQGILVRRSREQLEMEIDKFTIIQRDNMTIACAALYPFVEEKIGEMACVAVHPDYRSSSRGEILLERIAAQARQMGLSKLFVLTTRSIHWFQERGFTPVDIELLPESKKKMYNYQRRSKVLIADLG.

The N-acetyltransferase domain maps to 296–436 (EQIRRATIND…KMYNYQRRSK (141 aa)).

This sequence belongs to the acetyltransferase family. ArgA subfamily. As to quaternary structure, homohexamer.

The protein resides in the cytoplasm. It carries out the reaction L-glutamate + acetyl-CoA = N-acetyl-L-glutamate + CoA + H(+). The protein operates within amino-acid biosynthesis; L-arginine biosynthesis; N(2)-acetyl-L-ornithine from L-glutamate: step 1/4. This is Amino-acid acetyltransferase from Salmonella arizonae (strain ATCC BAA-731 / CDC346-86 / RSK2980).